Consider the following 324-residue polypeptide: tRNA dimethylallyltransferase (324 aa).

17–24 (GPTASGKT) serves as a coordination point for ATP. Residue 19–24 (TASGKT) participates in substrate binding. 3 interaction with substrate tRNA regions span residues 42–45 (DSAL), 166–170 (QRIQR), and 251–256 (RCVGYR).

The protein belongs to the IPP transferase family. As to quaternary structure, monomer. The cofactor is Mg(2+).

The catalysed reaction is adenosine(37) in tRNA + dimethylallyl diphosphate = N(6)-dimethylallyladenosine(37) in tRNA + diphosphate. Catalyzes the transfer of a dimethylallyl group onto the adenine at position 37 in tRNAs that read codons beginning with uridine, leading to the formation of N6-(dimethylallyl)adenosine (i(6)A). This is tRNA dimethylallyltransferase from Burkholderia thailandensis (strain ATCC 700388 / DSM 13276 / CCUG 48851 / CIP 106301 / E264).